The sequence spans 388 residues: Succinate--CoA ligase [ADP-forming] subunit beta (388 aa).

The region spanning 9–244 (KQLFAEYGLP…PSQDDAREAH (236 aa)) is the ATP-grasp domain. Residues Lys46, 53–55 (GRG), Glu99, Thr102, and Glu107 contribute to the ATP site. Positions 199 and 213 each coordinate Mg(2+). Residues Asn264 and 321 to 323 (GIV) contribute to the substrate site.

It belongs to the succinate/malate CoA ligase beta subunit family. Heterotetramer of two alpha and two beta subunits. Mg(2+) serves as cofactor.

It carries out the reaction succinate + ATP + CoA = succinyl-CoA + ADP + phosphate. The catalysed reaction is GTP + succinate + CoA = succinyl-CoA + GDP + phosphate. Its pathway is carbohydrate metabolism; tricarboxylic acid cycle; succinate from succinyl-CoA (ligase route): step 1/1. Succinyl-CoA synthetase functions in the citric acid cycle (TCA), coupling the hydrolysis of succinyl-CoA to the synthesis of either ATP or GTP and thus represents the only step of substrate-level phosphorylation in the TCA. The beta subunit provides nucleotide specificity of the enzyme and binds the substrate succinate, while the binding sites for coenzyme A and phosphate are found in the alpha subunit. This chain is Succinate--CoA ligase [ADP-forming] subunit beta, found in Pseudomonas paraeruginosa (strain DSM 24068 / PA7) (Pseudomonas aeruginosa (strain PA7)).